Here is a 207-residue protein sequence, read N- to C-terminus: MAALVEPLGLERDVSRAVELLERLQRSGELPPQKLQALQRVLQSRFCSAIREVYEQLYDTLDITGSAEIRAHATAKATVAAFTASEGHAHPRVVELPKTDEGLGFNIMGGKEQNSPIYISRVIPGGVADRHGGLKRGDQLLSVNGVSVEGEQHEKAVELLKAAQGSVKLVVRYTPRVLEEMEARFEKMRSARRRQQHQSYSSLESRG.

The Kinase interacting site motif lies at Met-1–Asp-13. An L27 domain is found at Leu-10 to Gly-65. The region spanning Val-93–Pro-175 is the PDZ domain. Positions Lys-187–Gly-207 are disordered. Positions His-197–Gly-207 are enriched in polar residues.

This sequence belongs to the lin-7 family. As to quaternary structure, forms a complex with CASK and CASKIN1. Component of the brain-specific heterotrimeric complex (LIN-10-LIN-2-LIN-7 complex) composed of at least APBA1, CASK, and LIN7, which associates with the motor protein KIF17 to transport vesicles along microtubules. Forms a heterotrimeric complex composed of MMP5, LIN7B and PATJ; the N-terminal L27 domain of PALS1 interacts with the L27 domain of PATJ and the C-terminal L27 domain of PALS1 interacts with the L27 domain of LIN7B. Forms a heterotrimeric complex with DLG1 and CASK via their L27 domains. Interacts with DLG4 and GRIN2B as well as CDH1 and CTNNB1, the channels KCNJ12/Kir2.2, KCNJ4/Kir2.3 and probably KCNJ2/Kir2.1 and SLC6A12/BGT-1 via its PDZ domain. The association of LIN7A with cadherin and beta-catenin is calcium-dependent, occurs at synaptic junctions and requires the actin cytoskeleton. Interacts with EGFR, ERBB2, ERBB3 and ERBB4 with both PDZ and KID domains. Associates with KIF17 via APBA1. Interacts with ASIC3. Interacts with TOPK. Interacts with RTKN. Interacts with APBA1. Interacts with MPP7. Interacts with DLG2. Interacts with DLG3.

The protein resides in the cell membrane. It is found in the basolateral cell membrane. Its subcellular location is the cell junction. The protein localises to the postsynaptic density membrane. It localises to the tight junction. Functionally, plays a role in establishing and maintaining the asymmetric distribution of channels and receptors at the plasma membrane of polarized cells. Forms membrane-associated multiprotein complexes that may regulate delivery and recycling of proteins to the correct membrane domains. The tripartite complex composed of LIN7 (LIN7A, LIN7B or LIN7C), CASK and APBA1 associates with the motor protein KIF17 to transport vesicles containing N-methyl-D-aspartate (NMDA) receptor subunit NR2B along microtubules. This complex may have the potential to couple synaptic vesicle exocytosis to cell adhesion in brain. Ensures the proper localization of GRIN2B (subunit 2B of the NMDA receptor) to neuronal postsynaptic density and may function in localizing synaptic vesicles at synapses where it is recruited by beta-catenin and cadherin. Required to localize Kir2 channels, GABA transporter (SLC6A12) and EGFR/ERBB1, ERBB2, ERBB3 and ERBB4 to the basolateral membrane of epithelial cells. May increase the amplitude of ASIC3 acid-evoked currents by stabilizing the channel at the cell surface. The sequence is that of Protein lin-7 homolog B (LIN7B) from Homo sapiens (Human).